We begin with the raw amino-acid sequence, 196 residues long: RNA-free ribonuclease P (196 aa).

This sequence belongs to the HARP family.

The enzyme catalyses Endonucleolytic cleavage of RNA, removing 5'-extranucleotides from tRNA precursor.. Its function is as follows. RNA-free RNase P that catalyzes the removal of the 5'-leader sequence from pre-tRNA to produce the mature 5'-terminus. This is RNA-free ribonuclease P from Thermodesulfovibrio yellowstonii (strain ATCC 51303 / DSM 11347 / YP87).